Consider the following 292-residue polypeptide: 1D-myo-inositol 2-acetamido-2-deoxy-alpha-D-glucopyranoside deacetylase (292 aa).

Zn(2+) is bound by residues His-12, Asp-15, and His-147.

Belongs to the MshB deacetylase family. The cofactor is Zn(2+).

It carries out the reaction 1D-myo-inositol 2-acetamido-2-deoxy-alpha-D-glucopyranoside + H2O = 1D-myo-inositol 2-amino-2-deoxy-alpha-D-glucopyranoside + acetate. In terms of biological role, catalyzes the deacetylation of 1D-myo-inositol 2-acetamido-2-deoxy-alpha-D-glucopyranoside (GlcNAc-Ins) in the mycothiol biosynthesis pathway. In Rhodococcus jostii (strain RHA1), this protein is 1D-myo-inositol 2-acetamido-2-deoxy-alpha-D-glucopyranoside deacetylase.